Consider the following 350-residue polypeptide: MERSFMKNNSSVNMTSWMGRVDHEDGELGLRWHQKVKVTNSTNQDGIMLLGFACDEGVIRNKGRKGAYAAPQVIRRALANLAWHHQSDVYDGGDIQCNDGDLELAQKQLGIKIKSALANRHQVIVLGGGHEVAWGSFQGIARYLQSRAVLTSPTPPPRIGIINFDAHFDLRNLSQSPSSSASQSSKQYGNSGTPFHQISEFCHVQHWPFHYACLGLNKGSNTQALYHKAKQLGVLHFDDIEMNLLNLPQIKQALSEFIEQNDFLYLTIDIDVFPASCAPGVSAPAVRGVSLDIIESLLPDILKAKNQHGESKLLLADLAEFNPTFDIDNQTARLVARLVWTIAHGMKSNM.

6 residues coordinate Mn(2+): histidine 130, aspartate 165, histidine 167, aspartate 169, aspartate 269, and aspartate 271.

This sequence belongs to the arginase family. Mn(2+) serves as cofactor.

It carries out the reaction N-formimidoyl-L-glutamate + H2O = formamide + L-glutamate. It functions in the pathway amino-acid degradation; L-histidine degradation into L-glutamate; L-glutamate from N-formimidoyl-L-glutamate (hydrolase route): step 1/1. Functionally, catalyzes the conversion of N-formimidoyl-L-glutamate to L-glutamate and formamide. This is Formimidoylglutamase from Aliivibrio fischeri (strain ATCC 700601 / ES114) (Vibrio fischeri).